The primary structure comprises 266 residues: Uxu operon regulator (266 aa).

One can recognise an HTH gntR-type domain in the interval 23-91 (NRTYTRIGQL…KGSGVYVVRT (69 aa)). The H-T-H motif DNA-binding region spans 51 to 70 (EREISEKFGVSRTIVREAMV).

Its function is as follows. Repressor for the uxuRBA operon. This Haemophilus influenzae (strain ATCC 51907 / DSM 11121 / KW20 / Rd) protein is Uxu operon regulator (uxuR).